The sequence spans 102 residues: ATP-dependent Clp protease adapter protein ClpS (102 aa).

The protein belongs to the ClpS family. In terms of assembly, binds to the N-terminal domain of the chaperone ClpA.

Its function is as follows. Involved in the modulation of the specificity of the ClpAP-mediated ATP-dependent protein degradation. This chain is ATP-dependent Clp protease adapter protein ClpS, found in Aromatoleum aromaticum (strain DSM 19018 / LMG 30748 / EbN1) (Azoarcus sp. (strain EbN1)).